The sequence spans 206 residues: Sclerostin domain-containing protein 1 (206 aa).

An N-terminal signal peptide occupies residues Met-1–Ala-23. The disordered stretch occupies residues Ala-42 to Ser-62. A compositionally biased stretch (polar residues) spans Pro-44–Ser-62. Asn-47 carries an N-linked (GlcNAc...) asparagine glycan. Intrachain disulfides connect Cys-75/Cys-133, Cys-89/Cys-147, Cys-100/Cys-163, and Cys-104/Cys-165. In terms of domain architecture, CTCK spans Cys-75 to Arg-170. An N-linked (GlcNAc...) asparagine glycan is attached at Asn-173. Positions Ser-176 to Ser-206 are disordered. Over residues Ala-188 to Ser-206 the composition is skewed to basic residues.

Belongs to the sclerostin family. In terms of assembly, interacts with BMP2, BMP4, BMP6 and BMP7 with high affinity. Highly expressed in kidney at renal collecting ducts level and weakly in brain.

It is found in the secreted. Functionally, may be involved in the onset of endometrial receptivity for implantation/sensitization for the decidual cell reaction. Enhances Wnt signaling and inhibits TGF-beta signaling. Directly antagonizes activity of BMP2, BMP4, BMP6 and BMP7 in a dose-dependent manner. The polypeptide is Sclerostin domain-containing protein 1 (Sostdc1) (Mus musculus (Mouse)).